We begin with the raw amino-acid sequence, 301 residues long: MSKHLTHLKQLEAESIQIMREVAAEFDNPVMLYSVGKDSSVLLHLARKAFYPGKIPFPLMHVDTNWKFKEMIEFRDQMAEKHGFDLIVHKNPRGIEMGISPFTHGSAKHTDIMKTEGLKQALDMHGFDAAFGGARRDEEKSRAKERVYSFRDSKHRWDPKNQRPELWNIYNGKVDKGESIRVFPLSNWTELDIWQYIYLEGIEIPSLYLAAERPVVERDGTLIMVDDERMPIESGEDVQTKMVRFRTLGCYPLTGAVESEAQTLPEIIQEMLLCTTSERQGRVIDNDSAGSMEKKKMEGYF.

It belongs to the PAPS reductase family. CysD subfamily. Heterodimer composed of CysD, the smaller subunit, and CysN.

It carries out the reaction sulfate + ATP + H(+) = adenosine 5'-phosphosulfate + diphosphate. It functions in the pathway sulfur metabolism; hydrogen sulfide biosynthesis; sulfite from sulfate: step 1/3. Functionally, with CysN forms the ATP sulfurylase (ATPS) that catalyzes the adenylation of sulfate producing adenosine 5'-phosphosulfate (APS) and diphosphate, the first enzymatic step in sulfur assimilation pathway. APS synthesis involves the formation of a high-energy phosphoric-sulfuric acid anhydride bond driven by GTP hydrolysis by CysN coupled to ATP hydrolysis by CysD. In Shewanella sediminis (strain HAW-EB3), this protein is Sulfate adenylyltransferase subunit 2 1.